A 234-amino-acid polypeptide reads, in one-letter code: Sugar fermentation stimulation protein A (234 aa).

A DNA-binding region (H-T-H motif) is located at residues 201–220; that stretch reads LLSEAQQRGVEILAYKAEIS.

It belongs to the SfsA family.

In terms of biological role, binds to DNA non-specifically. Could be a regulatory factor involved in maltose metabolism. The sequence is that of Sugar fermentation stimulation protein A from Escherichia coli (strain 55989 / EAEC).